The following is a 169-amino-acid chain: Allophycocyanin subunit beta-18 (169 aa).

Residue Asn72 is modified to N4-methylasparagine. Cys82 is a (2R,3E)-phycocyanobilin binding site.

The protein belongs to the phycobiliprotein family. Heterodimer of ApcE and this beta chain. Contains one covalently linked bilin chromophore. The chromophore is added by phycocyanobilin lyase CpcUS.

It is found in the cellular thylakoid membrane. A variant beta-allophycocyanin (AP) which forms a complex with ApcE, a phycobilisome terminal emitter that influences energy transfer to photosystem II. This is Allophycocyanin subunit beta-18 (apcF) from Picosynechococcus sp. (strain ATCC 27264 / PCC 7002 / PR-6) (Agmenellum quadruplicatum).